Here is a 255-residue protein sequence, read N- to C-terminus: Cysteine protease avirulence protein AvrRpt2 (255 aa).

The tract at residues M1 to T50 is disordered. A propeptide spans M1–G71 (removed in mature form). The segment at F70–G71 is determinants of cleavage specificity. Residues K76–T100 are disordered. Over residues S86–D98 the composition is skewed to low complexity. C122 functions as the Nucleophile in the catalytic mechanism. Residues H208 and D226 contribute to the active site.

It belongs to the peptidase C70 family. In terms of assembly, interacts physically with plant cell ROC1 (Arabidopsis single-domain cyclophilin) and RIN4. Autocleaved inside plant cells upon activation by cyclophilin. Cleavage is crucial in subcellular location and in eliciting HR. Inhibited by cyclosporin A (cyclophilin inhibitor).

It is found in the secreted. The protein resides in the host cell membrane. Effector protein involved in gene-for-gene resistance in plants expressing RPS2. Its thiol protease activity is required for the degradation of plant cell RIN4 and consequent activation of RPS2 during bacterial infection. The activation of RPS2 is sufficient for the induction of hypersensitive response (HR) and plant resistance. Cleavage of RIN4 by AvrRpt2 also interferes with RPM1-mediated resistance activated by either AvrRpm1 or AvrB. Contributes to virulence in plants lacking the resistance protein RPS2 promoting pathogen growth and disease symptoms. Inhibits PAMP (pathogen-associated molecular patterns)-induced signaling compromising the host's basal defense system. Blocks plant callose deposition, flg22 (a peptide corresponding to the most conserved domain of flagellin) induced accumulation of PR-1, PR-2 and PR-5 and activation of GST6 transcription. The mechanism of virulence is unknown, but this activity is independent of ethylene and salicylic acid response pathways and independent of RIN4 disappearance. The polypeptide is Cysteine protease avirulence protein AvrRpt2 (avrRpt2) (Pseudomonas syringae pv. tomato).